The sequence spans 387 residues: MEQVVIVDAIRTPMGRSKGGAFRNVRAEDLSAHLMRSLLARNPALEAAALDDIYWGCVQQTLEQGFNIARNAALLAEVPHSVPAVTVNRLCGSSMQALHDAARMIMTGDAQACLVGGVEHMGHVPMSHGVDFHPGLSRNVAKAAGMMGLTAEMLARMHGISREMQDAFAARSHARAWAATQSGAFKNEIIPTGGHDADGVLKQFNYDEVIRPETTVEALATLRPAFDPVSGTVTAGTSSALSDGAAAMLVMSESRARDLGLKPRACVRSMAVVGCDPSIMGYGPVPASKLALKKAGLSASDIGVFEMNEAFAAQILPCIKDLGLMEQIDEKINLNGGAIALGHPLGCSGARISTTLLNLMEHKDVQFGLATMCIGLGQGIATVFERV.

The Acyl-thioester intermediate role is filled by Cys91. Catalysis depends on proton acceptor residues His343 and Cys373.

It belongs to the thiolase-like superfamily. Thiolase family. In terms of assembly, heterotetramer of two alpha chains (FadB) and two beta chains (FadA).

Its subcellular location is the cytoplasm. It carries out the reaction an acyl-CoA + acetyl-CoA = a 3-oxoacyl-CoA + CoA. The protein operates within lipid metabolism; fatty acid beta-oxidation. Catalyzes the final step of fatty acid oxidation in which acetyl-CoA is released and the CoA ester of a fatty acid two carbons shorter is formed. The chain is 3-ketoacyl-CoA thiolase from Escherichia coli O6:K15:H31 (strain 536 / UPEC).